Here is a 264-residue protein sequence, read N- to C-terminus: Probable metallo-hydrolase YflN (264 aa).

Residues histidine 80, histidine 82, aspartate 84, histidine 85, histidine 169, aspartate 188, and histidine 241 each contribute to the Zn(2+) site.

The protein belongs to the metallo-beta-lactamase superfamily. The cofactor is Zn(2+).

This Bacillus subtilis (strain 168) protein is Probable metallo-hydrolase YflN (yflN).